Consider the following 702-residue polypeptide: Phosphate acetyltransferase (702 aa).

Positions 375 to 702 (AFRYELIQRA…QATQSAADCG (328 aa)) are phosphate acetyltransferase.

This sequence in the N-terminal section; belongs to the CobB/CobQ family. It in the C-terminal section; belongs to the phosphate acetyltransferase and butyryltransferase family. In terms of assembly, homohexamer.

It localises to the cytoplasm. It catalyses the reaction acetyl-CoA + phosphate = acetyl phosphate + CoA. It participates in metabolic intermediate biosynthesis; acetyl-CoA biosynthesis; acetyl-CoA from acetate: step 2/2. In terms of biological role, involved in acetate metabolism. The sequence is that of Phosphate acetyltransferase (pta) from Deinococcus radiodurans (strain ATCC 13939 / DSM 20539 / JCM 16871 / CCUG 27074 / LMG 4051 / NBRC 15346 / NCIMB 9279 / VKM B-1422 / R1).